A 648-amino-acid chain; its full sequence is MGLPKLVCVFLFAACCCCRRAAGVPGEEKQPVPTPDLVEAEVGSTALLKCGPSRASGNFSQVDWFLIHKERQILIFRVHQGKGQREPGEYEHRLSLQDSVATLALSHVTPHDERMFLCKSKRPRLQDHYVELQVFKAPEEPTIQANVVGIHVDRQELREVATCVGRNGYPIPQVLWYKNSLPLQEEENRVHIQSSQIVESSGLYTLKSVLSARLVKEDKDAQFYCELSYRLPSGNHMKESKEVTVPVFYPAEKVWVEVEPVGLLKEGDHVTIRCLTDGNPQPHFTINKKDPSTGEMEEESTDENGLLSLEPAEKHHSGLYQCQSLDLETTITLSSDPLELLVNYVSDVQVNPTAPEVQEGESLTLTCEAESNQDLEFEWLRDKTGQLLGKGPVLQLNNVRREAGGRYLCMASVPRVPGLNRTQLVSVGIFGSPWMALKERKVWVQENAVLNLSCEASGHPQPTISWNVNGSATEWNPDPQTVVSTLNVLVTPELLETGAECTASNSLGSNTTTIVLKLVTLTTLIPDSSQTTGLSTLTVSPHTRANSTSTEKKLPQPESKGVVIVAVIVCTLVLAVLGAALYFFYKKGKLPCGRSGKQEITLPPTRKSEFVVEVKSDKLPEEMALLQGSNGDKRAPGDQGEKYIDLRH.

An N-terminal signal peptide occupies residues Met-1–Gly-23. Ig-like V-type domains follow at residues Val-24–Glu-131 and Pro-141–Thr-244. The Extracellular segment spans residues Val-24 to Val-563. 5 disulfides stabilise this stretch: Cys-50–Cys-118, Cys-163–Cys-225, Cys-274–Cys-322, Cys-367–Cys-409, and Cys-454–Cys-501. Asn-58 is a glycosylation site (N-linked (GlcNAc...) asparagine). 3 Ig-like C2-type domains span residues Pro-246 to Thr-332, Pro-337 to Ser-426, and Ser-432 to Thr-512. Residues Gln-281–Asn-304 form a disordered region. An N-linked (GlcNAc...) asparagine glycan is attached at Asn-510. Positions Thr-532–Ser-549 are enriched in polar residues. Positions Thr-532 to Leu-554 are disordered. Residues Ile-564–Phe-584 traverse the membrane as a helical segment. Topologically, residues Tyr-585–His-648 are cytoplasmic. Residues Ser-608 and Ser-616 each carry the phosphoserine modification. Residues Leu-625–His-648 are disordered. Over residues Gly-631–His-648 the composition is skewed to basic and acidic residues.

As to expression, detected in melanoma cell lines.

Its subcellular location is the membrane. In terms of biological role, plays a role in cell adhesion, and in cohesion of the endothelial monolayer at intercellular junctions in vascular tissue. Its expression may allow melanoma cells to interact with cellular elements of the vascular system, thereby enhancing hematogeneous tumor spread. Could be an adhesion molecule active in neural crest cells during embryonic development. Acts as a surface receptor that triggers tyrosine phosphorylation of FYN and PTK2/FAK1, and a transient increase in the intracellular calcium concentration. This chain is Cell surface glycoprotein MUC18 (Mcam), found in Mus musculus (Mouse).